We begin with the raw amino-acid sequence, 311 residues long: Phosphoribosylamine--glycine ligase (311 aa).

In terms of domain architecture, ATP-grasp spans aspartate 1–arginine 191.

Belongs to the GARS family.

It localises to the plastid. The protein resides in the chloroplast. It carries out the reaction 5-phospho-beta-D-ribosylamine + glycine + ATP = N(1)-(5-phospho-beta-D-ribosyl)glycinamide + ADP + phosphate + H(+). It participates in purine metabolism; IMP biosynthesis via de novo pathway; N(1)-(5-phospho-D-ribosyl)glycinamide from 5-phospho-alpha-D-ribose 1-diphosphate: step 2/2. The sequence is that of Phosphoribosylamine--glycine ligase (PUR2) from Vigna unguiculata (Cowpea).